Consider the following 837-residue polypeptide: MGELFRSEEMTLAQLFLQSEAAYCCVSELGELGKVQFRDLNPDVNVFQRKFVNEVRRCEEMDRKLRFVEKEVKKANISILDTGENPEVPFPRDMIDLEANFEKIEIELKEINTNQEALKRNFLELTELKFILRKTQQFFDEMADPDLLEESSSLLEPSEMGRGAPLRLGFVAGVINRERIPTFERMLWRVCRGNVFLRQAEIENPLEDPVTGDSVHKSVFIIFFQGDQLKNRVKKICEGFRASLYPCPETPQERKEMATGVNTRIEDLQMVLNQTEDHRQRVLQAAAKSLRVWFIKVRKMKAIYHTLNLCNIDVTQKCLIAEVWCPVADLDSIQFALRRGTEHSGSTVPSILNRMQTNQTPPTYNKTNKFTYGFQNLVDAYGIGSYREINPAPYTIITFPFLFAVMFGDFGHGILMTLFAVWMVVRESRILSQKIDNELFTMMFSGRYIILLMGLFSIYTGLIYNDCFSKALNLFGSSWSVRPMFTDTWSEDLLKHTSVLQLNPNVTGVFNGPYPFGIDPIWSLATNKLTFLNSFKMKMSVVLGIIHMTFGVALSLLNHIYFKKPLNIYLGFIPEMIFMTTLFGYLVILIIYKWCAYDASTSMVAPSLLIHFINMFLFSYQDTSLPMLYKGQMGLQCFLVVCAIICVPWMLVVKPLILRRQYLRRKHLGTHNFGGIRVGNGPTEEDAEIIQHDQLSMHSEEGEEPAMEEVFDFGDTVVHQAIHTIEYCLGCISNTASYLRLWALSLAHAQLSEVLWTMVMHVGLSIRSLGGGIALVFVFSAFATLTIAILLIMEGLSAFLHALRLHWVEFQNKFYMGTGFKFLPFSFENIREGKFDE.

The Cytoplasmic portion of the chain corresponds to 1 to 388; the sequence is MGELFRSEEM…DAYGIGSYRE (388 aa). A helical transmembrane segment spans residues 389 to 407; the sequence is INPAPYTIITFPFLFAVMF. Residues 408 to 409 are Vacuolar-facing; it reads GD. Residues 410–426 form a helical membrane-spanning segment; it reads FGHGILMTLFAVWMVVR. Residues 427-441 lie on the Cytoplasmic side of the membrane; sequence ESRILSQKIDNELFT. Residues 442 to 471 form a helical membrane-spanning segment; it reads MMFSGRYIILLMGLFSIYTGLIYNDCFSKA. At 472-534 the chain is on the vacuolar side; that stretch reads LNLFGSSWSV…ATNKLTFLNS (63 aa). The chain crosses the membrane as a helical span at residues 535–554; it reads FKMKMSVVLGIIHMTFGVAL. Residues 555-572 are Cytoplasmic-facing; sequence SLLNHIYFKKPLNIYLGF. Residues 573–593 traverse the membrane as a helical segment; that stretch reads IPEMIFMTTLFGYLVILIIYK. Residues 594-638 are Vacuolar-facing; the sequence is WCAYDASTSMVAPSLLIHFINMFLFSYQDTSLPMLYKGQMGLQCF. A helical membrane pass occupies residues 639–658; sequence LVVCAIICVPWMLVVKPLIL. Over 659 to 724 the chain is Cytoplasmic; that stretch reads RRQYLRRKHL…DTVVHQAIHT (66 aa). The chain crosses the membrane as a helical span at residues 725–749; that stretch reads IEYCLGCISNTASYLRLWALSLAHA. Residues 750–770 lie on the Vacuolar side of the membrane; it reads QLSEVLWTMVMHVGLSIRSLG. A helical membrane pass occupies residues 771-809; it reads GGIALVFVFSAFATLTIAILLIMEGLSAFLHALRLHWVE. Residues 810-837 are Cytoplasmic-facing; it reads FQNKFYMGTGFKFLPFSFENIREGKFDE.

The protein belongs to the V-ATPase 116 kDa subunit family. V-ATPase is a heteromultimeric enzyme made up of two complexes: the ATP-hydrolytic V1 complex and the proton translocation V0 complex. The V1 complex consists of three catalytic AB heterodimers that form a heterohexamer, three peripheral stalks each consisting of EG heterodimers, one central rotor including subunits D and F, and the regulatory subunits C and H. The proton translocation complex V0 consists of the proton transport subunit a, a ring of proteolipid subunits c9c'', rotary subunit d, subunits e and f, and two accessory subunits.

Its subcellular location is the cytoplasmic vesicle. The protein localises to the clathrin-coated vesicle membrane. It localises to the secretory vesicle. The protein resides in the synaptic vesicle membrane. It is found in the melanosome. Functionally, subunit of the V0 complex of vacuolar(H+)-ATPase (V-ATPase), a multisubunit enzyme composed of a peripheral complex (V1) that hydrolyzes ATP and a membrane integral complex (V0) that translocates protons. V-ATPase is responsible for acidifying and maintaining the pH of intracellular compartments and in some cell types, is targeted to the plasma membrane, where it is responsible for acidifying the extracellular environment. Required for assembly and activity of the vacuolar ATPase. The chain is V-type proton ATPase 116 kDa subunit a 1 (atp6v0a1) from Xenopus tropicalis (Western clawed frog).